We begin with the raw amino-acid sequence, 312 residues long: Acetyl-coenzyme A carboxylase carboxyl transferase subunit alpha (312 aa).

Residues 36–286 (NLEKEISKTY…ADYVKKSLNE (251 aa)) enclose the CoA carboxyltransferase C-terminal domain.

Belongs to the AccA family. Acetyl-CoA carboxylase is a heterohexamer composed of biotin carboxyl carrier protein (AccB), biotin carboxylase (AccC) and two subunits each of ACCase subunit alpha (AccA) and ACCase subunit beta (AccD).

Its subcellular location is the cytoplasm. It carries out the reaction N(6)-carboxybiotinyl-L-lysyl-[protein] + acetyl-CoA = N(6)-biotinyl-L-lysyl-[protein] + malonyl-CoA. It participates in lipid metabolism; malonyl-CoA biosynthesis; malonyl-CoA from acetyl-CoA: step 1/1. In terms of biological role, component of the acetyl coenzyme A carboxylase (ACC) complex. First, biotin carboxylase catalyzes the carboxylation of biotin on its carrier protein (BCCP) and then the CO(2) group is transferred by the carboxyltransferase to acetyl-CoA to form malonyl-CoA. This is Acetyl-coenzyme A carboxylase carboxyl transferase subunit alpha from Campylobacter jejuni subsp. jejuni serotype O:23/36 (strain 81-176).